The primary structure comprises 440 residues: Probable aldose 1-epimerase ARB_05372 (440 aa).

The first 24 residues, 1–24, serve as a signal peptide directing secretion; that stretch reads MCGVLRQLMLLLLAFLSITPSCSA. Asparagine 32, asparagine 38, asparagine 43, asparagine 68, and asparagine 112 each carry an N-linked (GlcNAc...) asparagine glycan. Residue 125-126 participates in substrate binding; the sequence is NR. N-linked (GlcNAc...) asparagine glycans are attached at residues asparagine 129, asparagine 147, asparagine 163, asparagine 171, and asparagine 199. The active-site Proton donor is histidine 233. Residues asparagine 243, asparagine 275, asparagine 281, and asparagine 306 are each glycosylated (N-linked (GlcNAc...) asparagine). Aspartate 311 provides a ligand contact to substrate. 4 N-linked (GlcNAc...) asparagine glycosylation sites follow: asparagine 321, asparagine 337, asparagine 365, and asparagine 385. Glutamate 401 (proton acceptor) is an active-site residue.

Belongs to the aldose epimerase family. Monomer.

The protein localises to the secreted. The catalysed reaction is alpha-D-glucose = beta-D-glucose. Its pathway is carbohydrate metabolism; hexose metabolism. Mutarotase converts alpha-aldose to the beta-anomer. It is active on D-glucose, L-arabinose, D-xylose, D-galactose, maltose and lactose. This is Probable aldose 1-epimerase ARB_05372 from Arthroderma benhamiae (strain ATCC MYA-4681 / CBS 112371) (Trichophyton mentagrophytes).